Consider the following 884-residue polypeptide: Probable LRR receptor-like serine/threonine-protein kinase PAM74 (884 aa).

The signal sequence occupies residues 1–23 (MDSPCWLLLLLLGAFAIIGCVQA). Residues 24–510 (QDQQEFISLD…TEKNSKKKFP (487 aa)) lie on the Extracellular side of the membrane. 12 N-linked (GlcNAc...) asparagine glycosylation sites follow: Asn-143, Asn-182, Asn-200, Asn-256, Asn-289, Asn-400, Asn-403, Asn-417, Asn-433, Asn-444, Asn-465, and Asn-470. 3 LRR repeats span residues 412-433 (RVLSLNLSSSGLTGIIAAAIQN), 436-457 (HLEKLDLSNNTLTGVVPEFLAQ), and 460-480 (SLVIINLSGNNLSGPLPQGLR). A helical membrane pass occupies residues 511-531 (VVIVASVASVAIIVAVLVIIF). The Cytoplasmic segment spans residues 532–884 (VLSKKKSSTV…FDTELFPRAR (353 aa)). Residue Thr-570 is modified to Phosphothreonine. The region spanning 579 to 852 (NNFQRVVGEG…QVANELKECL (274 aa)) is the Protein kinase domain. ATP-binding positions include 585–593 (VGEGGFGVV) and Lys-607. A Phosphotyrosine modification is found at Tyr-652. The Proton acceptor role is filled by Asp-704. Ser-738 carries the phosphoserine modification. Phosphothreonine is present on residues Thr-739 and Thr-744. Residue Tyr-752 is modified to Phosphotyrosine.

It belongs to the protein kinase superfamily. Ser/Thr protein kinase family. In terms of assembly, binds to the ammonium transporter AMT1-1.

The protein resides in the membrane. It catalyses the reaction L-seryl-[protein] + ATP = O-phospho-L-seryl-[protein] + ADP + H(+). It carries out the reaction L-threonyl-[protein] + ATP = O-phospho-L-threonyl-[protein] + ADP + H(+). Required for accurate photosynthesis. In Arabidopsis thaliana (Mouse-ear cress), this protein is Probable LRR receptor-like serine/threonine-protein kinase PAM74 (PAM74).